Reading from the N-terminus, the 409-residue chain is Glutamyl-tRNA reductase (409 aa).

Substrate-binding positions include Thr-46 to Arg-49, Ser-88, Glu-93 to Glu-95, and Gln-99. The active-site Nucleophile is Cys-47. Gly-164 to Ala-169 contacts NADP(+).

This sequence belongs to the glutamyl-tRNA reductase family. Homodimer.

The catalysed reaction is (S)-4-amino-5-oxopentanoate + tRNA(Glu) + NADP(+) = L-glutamyl-tRNA(Glu) + NADPH + H(+). The protein operates within porphyrin-containing compound metabolism; protoporphyrin-IX biosynthesis; 5-aminolevulinate from L-glutamyl-tRNA(Glu): step 1/2. Functionally, catalyzes the NADPH-dependent reduction of glutamyl-tRNA(Glu) to glutamate 1-semialdehyde (GSA). The chain is Glutamyl-tRNA reductase from Thermoplasma acidophilum (strain ATCC 25905 / DSM 1728 / JCM 9062 / NBRC 15155 / AMRC-C165).